Consider the following 224-residue polypeptide: Menaquinol:cytochrome c reductase cytochrome b subunit (224 aa).

A helical membrane pass occupies residues 37–57 (FSAFVYCFGGLTFFVTVIQIL). A heme b-binding site is contributed by tyrosine 42. Heme c is bound at residue cysteine 43. Residues arginine 91, histidine 94, histidine 108, and arginine 111 each contribute to the heme b site. 3 helical membrane-spanning segments follow: residues 96–116 (WGAS…FFQG), 126–146 (WIVG…GYLL), and 195–215 (IHVF…FLMI). Heme b contacts are provided by histidine 196 and histidine 211. Heme c-binding residues include arginine 216 and isoleucine 220. Position 221 (serine 221) interacts with heme b.

This sequence belongs to the cytochrome b family. As to quaternary structure, the main subunits of the menaquinol:cytochrome c complex are a Rieske-type iron-sulfur protein (QcrA), a cytochrome b (QcrB) and a cytochrome c (QcrC). Heme b serves as cofactor. It depends on heme c as a cofactor.

The protein localises to the cell membrane. Component of the menaquinol:cytochrome c reductase complex. In Geobacillus thermodenitrificans, this protein is Menaquinol:cytochrome c reductase cytochrome b subunit (qcrB).